The primary structure comprises 336 residues: Fructose-1,6-bisphosphatase class 1 (336 aa).

4 residues coordinate Mg(2+): E90, D112, L114, and D115. Residues 115–118 (DGSS), N211, and K277 each bind substrate. Residue E283 participates in Mg(2+) binding.

This sequence belongs to the FBPase class 1 family. As to quaternary structure, homotetramer. Mg(2+) serves as cofactor.

It localises to the cytoplasm. The catalysed reaction is beta-D-fructose 1,6-bisphosphate + H2O = beta-D-fructose 6-phosphate + phosphate. It functions in the pathway carbohydrate biosynthesis; gluconeogenesis. The chain is Fructose-1,6-bisphosphatase class 1 from Pseudomonas putida (strain W619).